Here is an 861-residue protein sequence, read N- to C-terminus: Glucans biosynthesis glucosyltransferase H (861 aa).

2 disordered regions span residues Arg-65–Arg-89 and Ala-101–Pro-129. Basic and acidic residues-rich tracts occupy residues Ser-67 to Thr-76 and Leu-105 to Val-114. 6 consecutive transmembrane segments (helical) span residues Phe-181 to Leu-201, Leu-208 to Phe-228, Val-532 to Leu-552, Leu-589 to Val-609, Gly-616 to Ala-636, and Phe-698 to Met-718.

Belongs to the glycosyltransferase 2 family. OpgH subfamily.

Its subcellular location is the cell inner membrane. It functions in the pathway glycan metabolism; osmoregulated periplasmic glucan (OPG) biosynthesis. Involved in the biosynthesis of osmoregulated periplasmic glucans (OPGs). This chain is Glucans biosynthesis glucosyltransferase H, found in Cupriavidus pinatubonensis (strain JMP 134 / LMG 1197) (Cupriavidus necator (strain JMP 134)).